Consider the following 915-residue polypeptide: Alpha-xylosidase 1 (915 aa).

A signal peptide spans Met1–Ser27. Residues Asn153, Asn304, and Asn375 are each glycosylated (N-linked (GlcNAc...) asparagine). Catalysis depends on residues Asp440 and Glu443. Residues Asn476 and Asn490 are each glycosylated (N-linked (GlcNAc...) asparagine). The Proton donor role is filled by Asp563. Asn819, Asn888, and Asn907 each carry an N-linked (GlcNAc...) asparagine glycan.

The protein belongs to the glycosyl hydrolase 31 family. In terms of tissue distribution, expressed in roots, stems, leaves, flowers and siliques. Expressed in cell types undergoing cell wall modifications, including trichomes, vasculature, stomata, and elongating anther filaments. Not detected in pollen.

It is found in the secreted. It localises to the cell wall. Its subcellular location is the extracellular space. The protein resides in the apoplast. It carries out the reaction Hydrolysis of terminal, non-reducing alpha-D-xylose residues with release of alpha-D-xylose.. Glycoside hydrolase releasing xylosyl residues from xyloglucan oligosaccharides at the non-reducing end. Has alpha-xylosidase activity against xylan oligosaccharides. Also has alpha-glucosidase activity against p-nitrophenyl-alpha-D-glucopyranoside. No activity against p-nitrophenyl-D-xyloside. This chain is Alpha-xylosidase 1, found in Arabidopsis thaliana (Mouse-ear cress).